The sequence spans 237 residues: Phosphoadenosine 5'-phosphosulfate reductase (237 aa).

Cysteine 231 functions as the Nucleophile; cysteine thiosulfonate intermediate in the catalytic mechanism.

The protein belongs to the PAPS reductase family. CysH subfamily.

It localises to the cytoplasm. The catalysed reaction is [thioredoxin]-disulfide + sulfite + adenosine 3',5'-bisphosphate + 2 H(+) = [thioredoxin]-dithiol + 3'-phosphoadenylyl sulfate. It functions in the pathway sulfur metabolism; hydrogen sulfide biosynthesis; sulfite from sulfate: step 3/3. Catalyzes the formation of sulfite from phosphoadenosine 5'-phosphosulfate (PAPS) using thioredoxin as an electron donor. The chain is Phosphoadenosine 5'-phosphosulfate reductase from Xylella fastidiosa (strain 9a5c).